A 212-amino-acid chain; its full sequence is Pyridoxine/pyridoxamine 5'-phosphate oxidase (212 aa).

Residues 59-64 (RMVLMK), 74-75 (YS), Lys81, and Gln103 each bind FMN. Residue Lys64 participates in substrate binding. 2 residues coordinate substrate: Tyr121 and Arg125. FMN is bound by residues 138 to 139 (QS) and Trp183. 189-191 (RLH) provides a ligand contact to substrate. Residue Arg193 coordinates FMN.

The protein belongs to the pyridoxamine 5'-phosphate oxidase family. In terms of assembly, homodimer. The cofactor is FMN.

The enzyme catalyses pyridoxamine 5'-phosphate + O2 + H2O = pyridoxal 5'-phosphate + H2O2 + NH4(+). It catalyses the reaction pyridoxine 5'-phosphate + O2 = pyridoxal 5'-phosphate + H2O2. It participates in cofactor metabolism; pyridoxal 5'-phosphate salvage; pyridoxal 5'-phosphate from pyridoxamine 5'-phosphate: step 1/1. The protein operates within cofactor metabolism; pyridoxal 5'-phosphate salvage; pyridoxal 5'-phosphate from pyridoxine 5'-phosphate: step 1/1. Functionally, catalyzes the oxidation of either pyridoxine 5'-phosphate (PNP) or pyridoxamine 5'-phosphate (PMP) into pyridoxal 5'-phosphate (PLP). This chain is Pyridoxine/pyridoxamine 5'-phosphate oxidase, found in Rhodopseudomonas palustris (strain BisB5).